Here is a 579-residue protein sequence, read N- to C-terminus: Folliculin (579 aa).

The tract at residues glycine 32 to cysteine 82 is disordered. Phosphoserine is present on residues serine 62 and serine 73. One can recognise a uDENN FLCN/SMCR8-type domain in the interval arginine 86–threonine 242. A coiled-coil region spans residues glutamate 287 to alanine 310. Acidic residues predominate over residues glutamate 294 to glutamate 308. A disordered region spans residues glutamate 294 to arginine 320. A phosphoserine mark is found at serine 302, serine 406, serine 537, serine 542, and serine 571. One can recognise a cDENN FLCN/SMCR8-type domain in the interval glutamine 339–threonine 491. One can recognise a dDENN FLCN/SMCR8-type domain in the interval glutamine 493–serine 558.

The protein belongs to the folliculin family. Interacts (via C-terminus) with FNIP1 or FNIP2 (via C-terminus). Component of the lysosomal folliculin complex (LFC), composed of FLCN, FNIP1 (or FNIP2), RagA/RRAGA or RagB/RRAGB GDP-bound, RagC/RRAGC or RagD/RRAGD GTP-bound, and Ragulator. Interaction with FNIP1 or FNIP2 mediates indirect interaction with the PRKAA1, PRKAB1 and PRKAG1 subunits of 5'-AMP-activated protein kinase (AMPK). Interacts with HSP90AA1 in the presence of FNIP1. Interacts with HSP70, STUB1, CDC37, AHSA1, CCT2, STIP1, PTGES3 and PPP5C. Interacts with GABARAP; interaction takes place in the presence of FNIP1 and/or FNIP2. Interacts with RILP; the interaction is direct and promotes association between RILP and RAB34. Interacts with KIF3A and KIF3B. Interacts with lactate dehydrogenase LDHA, but not LDHB; the interaction is direct, may preferentially bind LDHA dimers rather than tetramers, and regulates LDHA activity, acting as an uncompetitive inhibitor. Phosphorylation by ULK1 modulates the interaction with GABARAP and is required to regulate autophagy. As to expression, expressed in kidney.

It localises to the lysosome membrane. The protein resides in the cytoplasm. The protein localises to the cytosol. Its subcellular location is the cell projection. It is found in the cilium. It localises to the cytoskeleton. The protein resides in the microtubule organizing center. The protein localises to the centrosome. Its subcellular location is the spindle. It is found in the nucleus. GTPase-activating activity is inhibited in the folliculin complex (LFC), which stabilizes the GDP-bound state of RagA/RRAGA (or RagB/RRAGB), because Arg-164 is located far from the RagC/RRAGC or RagD/RRAGD nucleotide pocket. Disassembly of the LFC complex upon amino acid restimulation liberates the GTPase-activating activity. Multi-functional protein, involved in both the cellular response to amino acid availability and in the regulation of glycolysis. GTPase-activating protein that plays a key role in the cellular response to amino acid availability through regulation of the non-canonical mTORC1 signaling cascade controlling the MiT/TFE factors TFEB and TFE3. Activates mTORC1 by acting as a GTPase-activating protein: specifically stimulates GTP hydrolysis by RagC/RRAGC or RagD/RRAGD, promoting the conversion to the GDP-bound state of RagC/RRAGC or RagD/RRAGD, and thereby activating the kinase activity of mTORC1. The GTPase-activating activity is inhibited during starvation and activated in presence of nutrients. Acts as a key component for non-canonical mTORC1-dependent control of the MiT/TFE factors TFEB and TFE3, while it is not involved in mTORC1-dependent phosphorylation of canonical RPS6KB1/S6K1 and EIF4EBP1/4E-BP1. In low-amino acid conditions, the lysosomal folliculin complex (LFC) is formed on the membrane of lysosomes, which inhibits the GTPase-activating activity of FLCN, inactivates mTORC1 and maximizes nuclear translocation of TFEB and TFE3. Upon amino acid restimulation, RagA/RRAGA (or RagB/RRAGB) nucleotide exchange promotes disassembly of the LFC complex and liberates the GTPase-activating activity of FLCN, leading to activation of mTORC1 and subsequent cytoplasmic retention of TFEB and TFE3. Indirectly acts as a positive regulator of Wnt signaling by promoting mTOR-dependent cytoplasmic retention of MiT/TFE factor TFE3. Required for the exit of hematopoietic stem cell from pluripotency by promoting mTOR-dependent cytoplasmic retention of TFE3, thereby increasing Wnt signaling. Involved in the control of embryonic stem cells differentiation; together with LAMTOR1 it is necessary to recruit and activate RagC/RRAGC and RagD/RRAGD at the lysosomes, and to induce exit of embryonic stem cells from pluripotency via non-canonical, mTOR-independent TFE3 inactivation. Acts as an inhibitor of browning of adipose tissue by regulating mTOR-dependent cytoplasmic retention of TFE3. In response to flow stress, regulates STK11/LKB1 accumulation and mTORC1 activation through primary cilia: may act by recruiting STK11/LKB1 to primary cilia for activation of AMPK resided at basal bodies, causing mTORC1 down-regulation. Together with FNIP1 and/or FNIP2, regulates autophagy: following phosphorylation by ULK1, interacts with GABARAP and promotes autophagy. Required for starvation-induced perinuclear clustering of lysosomes by promoting association of RILP with its effector RAB34. Regulates glycolysis by binding to lactate dehydrogenase LDHA, acting as an uncompetitive inhibitor. This is Folliculin from Rattus norvegicus (Rat).